We begin with the raw amino-acid sequence, 254 residues long: MSFTVLIPARLASTRLPDKPLADIAGKPMVVRVAERAALSGAERVMIATDDARVQQAAADHGHAAILTRPDHPTGTDRLSEAVDALGLPDDAIVVNVQGDEPLIEPALIDAVAAQLVAAPHADIATCACPLADAEALFNPNVVKVVCAADRRALYFSRAPIPWARDALAGGARVLAPGLPAWHHIGIYAYRVAFLRRFPALSQGQLERYESLEQLRAMEHGHVIVVHHTDSAPAAGVDTPADLERARAAYTNRL.

Belongs to the KdsB family.

The protein resides in the cytoplasm. It catalyses the reaction 3-deoxy-alpha-D-manno-oct-2-ulosonate + CTP = CMP-3-deoxy-beta-D-manno-octulosonate + diphosphate. It participates in nucleotide-sugar biosynthesis; CMP-3-deoxy-D-manno-octulosonate biosynthesis; CMP-3-deoxy-D-manno-octulosonate from 3-deoxy-D-manno-octulosonate and CTP: step 1/1. The protein operates within bacterial outer membrane biogenesis; lipopolysaccharide biosynthesis. In terms of biological role, activates KDO (a required 8-carbon sugar) for incorporation into bacterial lipopolysaccharide in Gram-negative bacteria. This is 3-deoxy-manno-octulosonate cytidylyltransferase from Bordetella parapertussis (strain 12822 / ATCC BAA-587 / NCTC 13253).